The following is a 180-amino-acid chain: Type IV major pilin protein PilE1 (180 aa).

Residues 1–7 constitute a propeptide that is removed on maturation; the sequence is MNTLQKG. Phe8 carries the N-methylphenylalanine modification. A helical membrane pass occupies residues 8–28; sequence FTLIELMIVIAIVGILAAVAL. Ser70 carries an O-linked (GlcNAc...) serine glycan. A disulfide bond links Cys128 and Cys160.

Belongs to the N-Me-Phe pilin family. The pili are polar flexible filaments of about 5.4 nanometers diameter and 2.5 micrometers average length; they consist of only a single polypeptide chain arranged in a helical configuration of five subunits per turn in the assembled pilus.

It is found in the fimbrium. Its subcellular location is the membrane. Major component of the type IV pilus (T4P) that plays a role in cellular adherence, microcolony formation, resistance to neutrophil mediated killing, twitching motility as well as transformation. Mediates the attachment and the formation of bacterial microcolonies on host epithelial cells. Mechanistically, pili retractation induces host NF-kappa-B activation in infected cells, which is temporally associated with the formation of gonococcal microcolonies. The chain is Type IV major pilin protein PilE1 (pilE1) from Neisseria gonorrhoeae.